Reading from the N-terminus, the 193-residue chain is Xanthine phosphoribosyltransferase (193 aa).

The xanthine site is built by leucine 20 and threonine 27. A 5-phospho-alpha-D-ribose 1-diphosphate-binding site is contributed by 128-132 (ANGQA). Residue lysine 156 coordinates xanthine.

It belongs to the purine/pyrimidine phosphoribosyltransferase family. Xpt subfamily. In terms of assembly, homodimer.

It localises to the cytoplasm. The catalysed reaction is XMP + diphosphate = xanthine + 5-phospho-alpha-D-ribose 1-diphosphate. It functions in the pathway purine metabolism; XMP biosynthesis via salvage pathway; XMP from xanthine: step 1/1. In terms of biological role, converts the preformed base xanthine, a product of nucleic acid breakdown, to xanthosine 5'-monophosphate (XMP), so it can be reused for RNA or DNA synthesis. This is Xanthine phosphoribosyltransferase from Streptococcus pyogenes serotype M3 (strain ATCC BAA-595 / MGAS315).